The chain runs to 348 residues: MRSDWIFGACAVPDARMRSAALARQEQLTKPPGALGRLEHLAVQLAAWQRTERPGAQRVWIAVYAADHGVAAEGVSAFPQAVTGEMVRNFARGGAAIAVLARELGARLEVVNLGVVNDPGDLPRVRRAWIAPSSANICEQPAMTATQLRDAIAAGADSIAQARSCDTQLFVGGEMGIGNTTSAAALACALLSQFPQAMAGAGTGLDAEGIAHKATVITRALALHADASSPLERLRRLGGFEIAALVGAYIAAAQAGIPVLVDGFITTAAALVATRLNPGVREWLLFGHRSQERGHAALLRALDAEPLLQLDLRLGEASGAAVAIPLLRSACALHNGMATFAEAGVSDA.

Glu-316 functions as the Proton acceptor in the catalytic mechanism.

The protein belongs to the CobT family.

The enzyme catalyses 5,6-dimethylbenzimidazole + nicotinate beta-D-ribonucleotide = alpha-ribazole 5'-phosphate + nicotinate + H(+). It participates in nucleoside biosynthesis; alpha-ribazole biosynthesis; alpha-ribazole from 5,6-dimethylbenzimidazole: step 1/2. Its function is as follows. Catalyzes the synthesis of alpha-ribazole-5'-phosphate from nicotinate mononucleotide (NAMN) and 5,6-dimethylbenzimidazole (DMB). This chain is Nicotinate-nucleotide--dimethylbenzimidazole phosphoribosyltransferase, found in Xanthomonas axonopodis pv. citri (strain 306).